Reading from the N-terminus, the 226-residue chain is 7-cyano-7-deazaguanine synthase (226 aa).

9–19 (LSGGLDSATVL) provides a ligand contact to ATP. Residues cysteine 189, cysteine 199, cysteine 202, and cysteine 205 each coordinate Zn(2+).

It belongs to the QueC family. The cofactor is Zn(2+).

It carries out the reaction 7-carboxy-7-deazaguanine + NH4(+) + ATP = 7-cyano-7-deazaguanine + ADP + phosphate + H2O + H(+). It functions in the pathway purine metabolism; 7-cyano-7-deazaguanine biosynthesis. In terms of biological role, catalyzes the ATP-dependent conversion of 7-carboxy-7-deazaguanine (CDG) to 7-cyano-7-deazaguanine (preQ(0)). This chain is 7-cyano-7-deazaguanine synthase, found in Cupriavidus pinatubonensis (strain JMP 134 / LMG 1197) (Cupriavidus necator (strain JMP 134)).